A 72-amino-acid polypeptide reads, in one-letter code: MAKEELIEFEGVVSEALPDNRFRVQLENGVEVWAYASGKMQKHRIRILAGDRVKLEMSPYDLTKGRINYRHK.

Residues 1-72 (MAKEELIEFE…TKGRINYRHK (72 aa)) form the S1-like domain.

The protein belongs to the IF-1 family. As to quaternary structure, component of the 30S ribosomal translation pre-initiation complex which assembles on the 30S ribosome in the order IF-2 and IF-3, IF-1 and N-formylmethionyl-tRNA(fMet); mRNA recruitment can occur at any time during PIC assembly.

Its subcellular location is the cytoplasm. In terms of biological role, one of the essential components for the initiation of protein synthesis. Stabilizes the binding of IF-2 and IF-3 on the 30S subunit to which N-formylmethionyl-tRNA(fMet) subsequently binds. Helps modulate mRNA selection, yielding the 30S pre-initiation complex (PIC). Upon addition of the 50S ribosomal subunit IF-1, IF-2 and IF-3 are released leaving the mature 70S translation initiation complex. The sequence is that of Translation initiation factor IF-1 2 from Ralstonia nicotianae (strain ATCC BAA-1114 / GMI1000) (Ralstonia solanacearum).